The following is a 259-amino-acid chain: Global transcriptional regulator CodY (259 aa).

The segment at 1–155 (MALLQKTRII…GATVVGMEIL (155 aa)) is GAF domain. The segment at residues 203–222 (ASKIADRVGITRSVIVNALR) is a DNA-binding region (H-T-H motif). Phosphoserine is present on Ser215.

The protein belongs to the CodY family.

The protein resides in the cytoplasm. In terms of biological role, DNA-binding global transcriptional regulator which is involved in the adaptive response to starvation and acts by directly or indirectly controlling the expression of numerous genes in response to nutrient availability. During rapid exponential growth, CodY is highly active and represses genes whose products allow adaptation to nutrient depletion. The protein is Global transcriptional regulator CodY of Bacillus pumilus (strain SAFR-032).